The following is a 180-amino-acid chain: MSFKGTTVIAIRRGGKTVVAADGQVTFGYTVLKSNAIKIRKLFNGKILAGFAGSTSDAITLFEKFEEKVKAREDGIIDIKRAAVELAKDWRSDKILHKLEAMMLVADSENILLISGTGDVVEPEEDVISIGSGGNYAYSAALAYMENKKLSAADIAFKSLKVAARVCIYTNSNIVLEEIS.

Residue Thr6 is part of the active site. Na(+)-binding residues include Ala164, Cys167, and Thr170.

The protein belongs to the peptidase T1B family. HslV subfamily. In terms of assembly, a double ring-shaped homohexamer of HslV is capped on each side by a ring-shaped HslU homohexamer. The assembly of the HslU/HslV complex is dependent on binding of ATP.

The protein localises to the cytoplasm. It catalyses the reaction ATP-dependent cleavage of peptide bonds with broad specificity.. With respect to regulation, allosterically activated by HslU binding. In terms of biological role, protease subunit of a proteasome-like degradation complex believed to be a general protein degrading machinery. The polypeptide is ATP-dependent protease subunit HslV (Borrelia turicatae (strain 91E135)).